A 165-amino-acid chain; its full sequence is Fibrinogen-binding protein (165 aa).

The signal sequence occupies residues methionine 1–alanine 29.

In terms of assembly, interacts with host fibrinogen alpha chain/FGA. Interacts with host complement protein C3.

It is found in the secreted. Extracellular fibrinogen-binding protein that plays an important role in virulence. By interacting with the alpha chain of fibrinogen and its derivative fibrin, enhances a non-functional interaction between fibrinogen and platelets and is responsible for repression of fibrinogen-dependent platelet aggregation. In addition, assembles a fibrinogen protective shield around the bacteria which results in impaired phagocytic clearance by the host. Mechanistically, interacts with host complement C3b deposited on the surface of the bacterium via its C-terminal and then recruits fibrinogen via its N-terminal. The polypeptide is Fibrinogen-binding protein (fib) (Staphylococcus aureus).